The following is a 219-amino-acid chain: Small ribosomal subunit protein uS2m (219 aa).

It belongs to the universal ribosomal protein uS2 family. In terms of assembly, component of the mitochondrial ribosome small subunit.

It is found in the mitochondrion. In Arabidopsis thaliana (Mouse-ear cress), this protein is Small ribosomal subunit protein uS2m (RPS2).